The sequence spans 448 residues: Exodeoxyribonuclease 7 large subunit (448 aa).

The protein belongs to the XseA family. In terms of assembly, heterooligomer composed of large and small subunits.

The protein localises to the cytoplasm. The catalysed reaction is Exonucleolytic cleavage in either 5'- to 3'- or 3'- to 5'-direction to yield nucleoside 5'-phosphates.. Bidirectionally degrades single-stranded DNA into large acid-insoluble oligonucleotides, which are then degraded further into small acid-soluble oligonucleotides. The protein is Exodeoxyribonuclease 7 large subunit of Bacillus pumilus (strain SAFR-032).